The following is a 255-amino-acid chain: Glucanase inhibitor protein 4 (255 aa).

The first 21 residues, 1–21 (MKSITTASFALILFGVGAASA), serve as a signal peptide directing secretion. One can recognise a Peptidase S1 domain in the interval 29 to 255 (VLGGGAVPSG…ESLGMDQLGH (227 aa)). Residues Cys56 and Cys72 are joined by a disulfide bond. Residues Asn90, Asn105, Asn110, and Asn160 are each glycosylated (N-linked (GlcNAc...) asparagine). 2 cysteine pairs are disulfide-bonded: Cys180–Cys192 and Cys202–Cys235.

The protein belongs to the peptidase S1 family. Forms an apoplastic complex with host endoglucanases in tomato leaves during P.infestans infection.

It localises to the secreted. Secreted effector that suppresses host plant glucan elicitor-mediated defense responses. Targets host endoglucanases and inhibits the endoglucanase-mediated release of elicitor-active glucan oligosaccharides from P.infestans cell walls. In Phytophthora infestans (Potato late blight agent), this protein is Glucanase inhibitor protein 4.